Reading from the N-terminus, the 670-residue chain is Kinesin-like protein KIF2B (670 aa).

Thr122 bears the Phosphothreonine; by PLK1 mark. Residues Cys146–Leu173 adopt a coiled-coil conformation. The residue at position 201 (Ser201) is a Phosphoserine; by PLK1. A Kinesin motor domain is found at Arg210–Leu540. Residue Gly300–Thr307 participates in ATP binding.

This sequence belongs to the TRAFAC class myosin-kinesin ATPase superfamily. Kinesin family. MCAK/KIF2 subfamily. In terms of processing, phosphorylation at Thr-122 by PLK1 is required for activity in the correction of kinetochore-microtubules attachment errors, while phosphorylation at Ser-201 also by PLK1 is required for the kinetochore localization and activity in prometaphase.

It localises to the cytoplasm. The protein resides in the cytoskeleton. It is found in the microtubule organizing center. Its subcellular location is the centrosome. The protein localises to the spindle. It localises to the chromosome. The protein resides in the centromere. It is found in the kinetochore. Its function is as follows. Plus end-directed microtubule-dependent motor required for spindle assembly and chromosome movement during mitosis. Has microtubule depolymerization activity. Plays a role in chromosome congression. This Macaca fascicularis (Crab-eating macaque) protein is Kinesin-like protein KIF2B (KIF2B).